The chain runs to 970 residues: Sodium/calcium exchanger 1 (970 aa).

The first 32 residues, 1-32 (MLRLSLSPTYSLGFHLLAMMTLLISHVDHITA), serve as a signal peptide directing secretion. The Extracellular segment spans residues 33–71 (ETEMVEEGNETGECTGSYYCKKGVILPIWEPQDPSFGDK). N41 is a glycosylation site (N-linked (GlcNAc...) asparagine). A helical membrane pass occupies residues 72–92 (IARATVYFVAMVYMFLGVSII). The Cytoplasmic portion of the chain corresponds to 93-133 (ADRFMSSIEVITSQEKEITIKKPNGETTKTTVRIWNETVSN). The helical transmembrane segment at 134–154 (LTLMALGSSAPEILLSVIEVC) threads the bilayer. An Alpha-1 repeat occupies 138–178 (ALGSSAPEILLSVIEVCGHNFTAGDLGPSTIVGSAAFNMFI). The Extracellular segment spans residues 155–167 (GHNFTAGDLGPST). The N-linked (GlcNAc...) asparagine glycan is linked to N157. Residues 168–188 (IVGSAAFNMFIIIALCVYVVP) traverse the membrane as a helical segment. At 189 to 201 (DGETRKIKHLRVF) the chain is on the cytoplasmic side. A helical membrane pass occupies residues 202–222 (FVTAAWSIFAYTWLYIILSVI). Topologically, residues 223 to 228 (SPGVVE) are extracellular. A helical transmembrane segment spans residues 229-249 (VWEGLLTFFFFPICVVFAWVA). At 250 to 797 (DRRLLFYKYV…FVPPTEYWNG (548 aa)) the chain is on the cytoplasmic side. The interval 251–270 (RRLLFYKYVYKRYRAGKQRG) is putative calmodulin-binding region. Phosphoserine occurs at positions 282 and 389. Calx-beta domains are found at residues 393 to 493 (VNTE…VHLS) and 524 to 624 (ATVT…LEIG). E417, D453, D478, D479, I481, E483, E486, D530, D531, D532, E548, D584, D610, E611, E612, and E715 together coordinate Ca(2+). A helical membrane pass occupies residues 798–818 (WACFIVSILMIGLLTAFIGDL). Residues 819–821 (ASH) are Extracellular-facing. Residues 822–842 (FGCTIGLKDSVTAVVFVALGT) traverse the membrane as a helical segment. One copy of the Alpha-2 repeat lies at 839–875 (ALGTSVPDTFASKVAATQDQYADASIGNVTGSNAVNV). Over 843–871 (SVPDTFASKVAATQDQYADASIGNVTGSN) the chain is Cytoplasmic. A helical transmembrane segment spans residues 872–892 (AVNVFLGIGVAWSIAAIYHAA). Residues 893-903 (NGEQFKVSPGT) lie on the Extracellular side of the membrane. The chain crosses the membrane as a helical span at residues 904–924 (LAFSVTLFTIFAFINVGVLLY). Topologically, residues 925 to 941 (RRRPEIGGELGGPRTAK) are cytoplasmic. The helical transmembrane segment at 942–962 (LLTSCLFVLLWLLYIFFSSLE) threads the bilayer. Topologically, residues 963 to 970 (AYCHIKGF) are extracellular.

It belongs to the Ca(2+):cation antiporter (CaCA) (TC 2.A.19) family. SLC8 subfamily.

It is found in the cell membrane. It catalyses the reaction Ca(2+)(in) + 3 Na(+)(out) = Ca(2+)(out) + 3 Na(+)(in). Its activity is regulated as follows. Activated by micromolar levels of Ca(2+). In terms of biological role, mediates the exchange of one Ca(2+) ion against three to four Na(+) ions across the cell membrane, and thereby contributes to the regulation of cytoplasmic Ca(2+) levels and Ca(2+)-dependent cellular processes. Contributes to Ca(2+) transport during excitation-contraction coupling in muscle. In a first phase, voltage-gated channels mediate the rapid increase of cytoplasmic Ca(2+) levels due to release of Ca(2+) stores from the endoplasmic reticulum. SLC8A1 mediates the export of Ca(2+) from the cell during the next phase, so that cytoplasmic Ca(2+) levels rapidly return to baseline. Required for normal embryonic heart development and the onset of heart contractions. The sequence is that of Sodium/calcium exchanger 1 (SLC8A1) from Cavia porcellus (Guinea pig).